The sequence spans 696 residues: Polyribonucleotide nucleotidyltransferase (696 aa).

Mg(2+) is bound by residues aspartate 483 and aspartate 489. The KH domain maps to 550–609; the sequence is PRITTIWVKVDKIRDVIGSGGKNIRSVTEATGVSIDIDDTGKINIASTNKEACDLAIKMI. The S1 motif domain occupies 619-687; it reads GKLYMGTVKK…KQGKIKLSRK (69 aa).

Belongs to the polyribonucleotide nucleotidyltransferase family. The cofactor is Mg(2+).

It is found in the cytoplasm. The catalysed reaction is RNA(n+1) + phosphate = RNA(n) + a ribonucleoside 5'-diphosphate. Involved in mRNA degradation. Catalyzes the phosphorolysis of single-stranded polyribonucleotides processively in the 3'- to 5'-direction. The protein is Polyribonucleotide nucleotidyltransferase of Citrifermentans bemidjiense (strain ATCC BAA-1014 / DSM 16622 / JCM 12645 / Bem) (Geobacter bemidjiensis).